Here is a 44-residue protein sequence, read N- to C-terminus: uncharacterized protein (44 aa).

This is an uncharacterized protein from Saccharomyces cerevisiae (strain ATCC 204508 / S288c) (Baker's yeast).